Here is a 1369-residue protein sequence, read N- to C-terminus: MutS protein homolog 5 (1369 aa).

The disordered stretch occupies residues 138–190 (IYEDGTTEEGTSEDTVPTWDSSLAYSTDETTAEKEEKEEDEDDDDEGLPAKLN). Residues 173-184 (EKEEDEDDDDEG) are compositionally biased toward acidic residues. ATP is bound at residue 639 to 646 (GPNACGKS). 4 disordered regions span residues 880 to 915 (SMRN…SVLS), 935 to 1135 (KKKK…RSSN), 1153 to 1182 (LKSQ…HSQN), and 1248 to 1278 (NFIF…SSIS). Residues 884–894 (VSEEIEKERSE) show a composition bias toward basic and acidic residues. Polar residues-rich tracts occupy residues 895-915 (ASTP…SVLS) and 941-950 (TGSSMESSMS). Residues 954-967 (FQEEDEGTEGEEDQ) are compositionally biased toward acidic residues. The segment covering 991–1003 (QSINSRHSFSTRT) has biased composition (polar residues). Over residues 1024–1037 (STSTSSPGPSASKS) the composition is skewed to low complexity. Residues 1049–1065 (VKESQVLETPKQLSISS) show a composition bias toward polar residues. The segment covering 1073 to 1084 (SSEKDVISRVSE) has biased composition (basic and acidic residues). 2 stretches are compositionally biased toward polar residues: residues 1111–1124 (KNRS…QSAR) and 1153–1167 (LKSQ…TPRS). Residues 1254–1263 (PEPRSSEKQR) are compositionally biased toward basic and acidic residues.

It belongs to the DNA mismatch repair MutS family. In terms of assembly, heterooligomer of him-14 and msh-5. Interacts with the brc-1-brd-1 heterodimer. As to expression, expressed in the germline.

It is found in the chromosome. Crucial component in meiotic recombination, functioning at some point after the initiation step of recombination. Plays a role in promoting the crossover outcome of meiotic recombination events. Required for formation of normal meiotic crossover, and crossover and chiasmata generated by artificially made DNA breaks. Together with him-14 and zhp-3 plays a role in the activation of DNA damage-dependent apoptosis at the DNA damage checkpoint in pachytene cells. The sequence is that of MutS protein homolog 5 from Caenorhabditis elegans.